A 264-amino-acid chain; its full sequence is Thymidylate synthase (264 aa).

Arg-21 lines the dUMP pocket. His-51 contacts (6R)-5,10-methylene-5,6,7,8-tetrahydrofolate. DUMP is bound at residue 126 to 127 (RR). Cys-146 functions as the Nucleophile in the catalytic mechanism. DUMP contacts are provided by residues 166–169 (RSCD), Asn-177, and 207–209 (HLY). Asp-169 is a (6R)-5,10-methylene-5,6,7,8-tetrahydrofolate binding site. Ala-263 is a (6R)-5,10-methylene-5,6,7,8-tetrahydrofolate binding site.

The protein belongs to the thymidylate synthase family. Bacterial-type ThyA subfamily. As to quaternary structure, homodimer.

The protein resides in the cytoplasm. It catalyses the reaction dUMP + (6R)-5,10-methylene-5,6,7,8-tetrahydrofolate = 7,8-dihydrofolate + dTMP. The protein operates within pyrimidine metabolism; dTTP biosynthesis. Catalyzes the reductive methylation of 2'-deoxyuridine-5'-monophosphate (dUMP) to 2'-deoxythymidine-5'-monophosphate (dTMP) while utilizing 5,10-methylenetetrahydrofolate (mTHF) as the methyl donor and reductant in the reaction, yielding dihydrofolate (DHF) as a by-product. This enzymatic reaction provides an intracellular de novo source of dTMP, an essential precursor for DNA biosynthesis. In Klebsiella pneumoniae subsp. pneumoniae (strain ATCC 700721 / MGH 78578), this protein is Thymidylate synthase.